A 254-amino-acid chain; its full sequence is Triosephosphate isomerase (254 aa).

12–14 is a binding site for substrate; sequence NWK. Residue histidine 99 is the Electrophile of the active site. Glutamate 169 serves as the catalytic Proton acceptor. Residues glycine 175, serine 214, and 235–236 contribute to the substrate site; that span reads GG.

It belongs to the triosephosphate isomerase family. In terms of assembly, homodimer.

The protein resides in the cytoplasm. The catalysed reaction is D-glyceraldehyde 3-phosphate = dihydroxyacetone phosphate. The protein operates within carbohydrate biosynthesis; gluconeogenesis. It participates in carbohydrate degradation; glycolysis; D-glyceraldehyde 3-phosphate from glycerone phosphate: step 1/1. Involved in the gluconeogenesis. Catalyzes stereospecifically the conversion of dihydroxyacetone phosphate (DHAP) to D-glyceraldehyde-3-phosphate (G3P). This chain is Triosephosphate isomerase, found in Brucella melitensis biotype 1 (strain ATCC 23456 / CCUG 17765 / NCTC 10094 / 16M).